A 1183-amino-acid chain; its full sequence is 3-hydroxy-3-methylglutaryl-coenzyme A reductase (1183 aa).

Residues 1 to 245 (MAAILLPQRF…DLLKNAETLD (245 aa)) are Cytoplasmic-facing. The SSD domain maps to 245 to 426 (DIVIMLLGYI…FTFYTAILSI (182 aa)). The chain crosses the membrane as a helical span at residues 246 to 266 (IVIMLLGYIAMHLTFVSLFLS). The Lumenal segment spans residues 267–273 (MRKMGSK). The helical transmembrane segment at 274 to 294 (FWLGICTLFSSVFAFLFGLVV) threads the bilayer. The Cytoplasmic segment spans residues 295–299 (TTKLG). The chain crosses the membrane as a helical span at residues 300–320 (VPISVILLSEGLPFLVVTIGF). Topologically, residues 321–378 (EKNIVLTRAVMSHAIEHRRIQAQNSKSGKRSPERSTQNMIQYAVQAAIKEKGFEIIRD) are lumenal. The chain crosses the membrane as a helical span at residues 379 to 399 (YAIEIVILVIGAASGVQGGLQ). Residues 400 to 402 (QFC) lie on the Cytoplasmic side of the membrane. A helical transmembrane segment spans residues 403 to 423 (FLAAWTLFFDFILLFTFYTAI). The Lumenal portion of the chain corresponds to 424–482 (LSIKLEINRIKRHVDMRMALEDDGVSRRVAENVAKGDDELNRVRGDAPLFGRKSSSIPK). Residues 483 to 503 (FKVLMILGFIFVNIVNICSIP) traverse the membrane as a helical segment. The Cytoplasmic portion of the chain corresponds to 504 to 1183 (FRNPSSMSTI…SAAAIQRSKR (680 aa)). Glu-828 acts as the Charge relay system in catalysis. 834–840 (SASRGCK) contacts CoA. NADP(+) is bound by residues 895-897 (SRF) and 922-930 (DAMGMNMIS). The Charge relay system role is filled by Lys-962. CoA is bound at residue 991 to 993 (VLK). Residue Asp-1038 is the Charge relay system of the active site. 1133–1134 (AH) provides a ligand contact to CoA. The Proton donor role is filled by His-1134. The tract at residues 1136–1183 (QHNRSAAPSRSTTPAPPMTPVSLAMTSAQERSASTTSMSAAAIQRSKR) is disordered. 1138-1139 (NR) lines the NADP(+) pocket. Low complexity-rich tracts occupy residues 1139-1148 (RSAAPSRSTT) and 1167-1177 (SASTTSMSAAA).

Belongs to the HMG-CoA reductase family.

The protein resides in the endoplasmic reticulum membrane. It carries out the reaction (R)-mevalonate + 2 NADP(+) + CoA = (3S)-3-hydroxy-3-methylglutaryl-CoA + 2 NADPH + 2 H(+). It participates in metabolic intermediate biosynthesis; (R)-mevalonate biosynthesis; (R)-mevalonate from acetyl-CoA: step 3/3. In terms of biological role, HMG-CoA reductase; part of the first module of ergosterol biosynthesis pathway that includes the early steps of the pathway, conserved across all eukaryotes, and which results in the formation of mevalonate from acetyl-coenzyme A (acetyl-CoA). In this module, the cytosolic acetyl-CoA acetyltransferase catalyzes the formation of acetoacetyl-CoA. The hydroxymethylglutaryl-CoA synthase then condenses acetyl-CoA with acetoacetyl-CoA to form HMG-CoA. The rate-limiting step of the early module is the reduction to mevalonate by the 3-hydroxy-3-methylglutaryl-coenzyme A (HMG-CoA) reductase HMGR. This is 3-hydroxy-3-methylglutaryl-coenzyme A reductase (HMGR) from Gibberella fujikuroi (strain CBS 195.34 / IMI 58289 / NRRL A-6831) (Bakanae and foot rot disease fungus).